A 183-amino-acid polypeptide reads, in one-letter code: Large ribosomal subunit protein uL5 (183 aa).

The protein belongs to the universal ribosomal protein uL5 family. As to quaternary structure, part of the 50S ribosomal subunit; part of the 5S rRNA/L5/L18/L25 subcomplex. Contacts the 5S rRNA and the P site tRNA. Forms a bridge to the 30S subunit in the 70S ribosome.

In terms of biological role, this is one of the proteins that bind and probably mediate the attachment of the 5S RNA into the large ribosomal subunit, where it forms part of the central protuberance. In the 70S ribosome it contacts protein S13 of the 30S subunit (bridge B1b), connecting the 2 subunits; this bridge is implicated in subunit movement. Contacts the P site tRNA; the 5S rRNA and some of its associated proteins might help stabilize positioning of ribosome-bound tRNAs. This Christiangramia forsetii (strain DSM 17595 / CGMCC 1.15422 / KT0803) (Gramella forsetii) protein is Large ribosomal subunit protein uL5.